A 130-amino-acid polypeptide reads, in one-letter code: Small ribosomal subunit protein uS11 (130 aa).

It belongs to the universal ribosomal protein uS11 family. In terms of assembly, part of the 30S ribosomal subunit. Interacts with proteins S7 and S18. Binds to IF-3.

Its function is as follows. Located on the platform of the 30S subunit, it bridges several disparate RNA helices of the 16S rRNA. Forms part of the Shine-Dalgarno cleft in the 70S ribosome. This is Small ribosomal subunit protein uS11 from Gloeothece citriformis (strain PCC 7424) (Cyanothece sp. (strain PCC 7424)).